Reading from the N-terminus, the 319-residue chain is tRNA uridine(34) hydroxylase (319 aa).

The Rhodanese domain maps to 127 to 221 (KQEDTVIIDA…YGKDPEVQGE (95 aa)). C181 serves as the catalytic Cysteine persulfide intermediate.

The protein belongs to the TrhO family.

The enzyme catalyses uridine(34) in tRNA + AH2 + O2 = 5-hydroxyuridine(34) in tRNA + A + H2O. In terms of biological role, catalyzes oxygen-dependent 5-hydroxyuridine (ho5U) modification at position 34 in tRNAs. In Bacillus cereus (strain B4264), this protein is tRNA uridine(34) hydroxylase.